Consider the following 85-residue polypeptide: Beta-insect depressant toxin Lqh-dprIT3a (85 aa).

The N-terminal stretch at 1-21 is a signal peptide; it reads MKLLLLLTISASMLIEGLVNA. The LCN-type CS-alpha/beta domain occupies 22-82; the sequence is DGYIRGGDGC…EWDYETNTCG (61 aa). Cystine bridges form between cysteine 31/cysteine 81, cysteine 35/cysteine 56, cysteine 42/cysteine 63, and cysteine 46/cysteine 65. Glycine 82 bears the Glycine amide mark.

It belongs to the long (4 C-C) scorpion toxin superfamily. Sodium channel inhibitor family. Beta subfamily. In terms of tissue distribution, expressed by the venom gland.

It is found in the secreted. Depressant insect beta-toxins cause a transient contraction paralysis followed by a slow flaccid paralysis. They bind voltage-independently at site-4 of sodium channels (Nav) and block action potentials, primarily by depolarizing the axonal membrane and suppressing the sodium current. This depressant toxin is active only on insects. It is found in a relatively small amount in the venom, and its activity on insects is 10-fold higher compared to other known depressant toxins. The chain is Beta-insect depressant toxin Lqh-dprIT3a from Leiurus hebraeus (Hebrew deathstalker scorpion).